We begin with the raw amino-acid sequence, 158 residues long: Putative zinc-binding protein ORF9 (158 aa).

The RING-type; degenerate zinc finger occupies 72–111; the sequence is CPVCGRAVVGPTVREACGHVTCNACETEACAVDRLCIGGG. The disordered stretch occupies residues 126–158; that stretch reads GPRWRGPRPTRPEAHEAVQRSRGSSEDACTCAP. The span at 135-150 shows a compositional bias: basic and acidic residues; sequence TRPEAHEAVQRSRGSS.

This chain is Putative zinc-binding protein ORF9 (ORF9), found in Ictalurid herpesvirus 1 (strain Auburn) (IcHV-1).